Here is a 276-residue protein sequence, read N- to C-terminus: Probable transposase for insertion sequence element IS702 (276 aa).

In terms of domain architecture, DDE Tnp4 spans 118-256 (MDVTESPIER…SNQYRNRHRR (139 aa)). 4 residues coordinate a divalent metal cation: Asp-119, Asp-170, Asp-190, and Glu-234.

Belongs to the transposase 11 family. A divalent metal cation is required as a cofactor.

Its function is as follows. Involved in the transposition of the insertion sequence. In Microchaete diplosiphon (Fremyella diplosiphon), this protein is Probable transposase for insertion sequence element IS702.